The primary structure comprises 1770 residues: AF4/FMR2 family member lilli (1770 aa).

Low complexity-rich tracts occupy residues 1-19 (MAQQQQQQQQQQHLQHPHQ), 154-204 (LGHS…YLKQ), and 227-269 (PSSS…GTTP). Disordered regions lie at residues 1-28 (MAQQQQQQQQQQHLQHPHQNTNSNNQLQ), 134-327 (SRHA…EKDI), 402-660 (TSLL…PGNV), 761-805 (LHSA…LQLP), 822-1173 (MQKA…KQGQ), and 1291-1390 (KHEH…QISK). Residues 402–414 (TSLLTTPPHASQG) show a composition bias toward polar residues. Over residues 434–447 (KAAAALSPTAAAKP) the composition is skewed to low complexity. Residues 448 to 461 (LKTEKNHTLEKQDS) show a composition bias toward basic and acidic residues. Acidic residues predominate over residues 463–474 (LENDLELSESED). Phosphoserine is present on residues Ser470 and Ser472. Low complexity predominate over residues 483 to 503 (SAGNSSNSSESDSSESGSESS). Residues 511 to 520 (QHHHHNHHHQ) are compositionally biased toward basic residues. Low complexity predominate over residues 521-552 (QQQQQLQQQQQQQLLQQKQQHQQILQQQQRQL). Residues 582–614 (FGSGGAGNGGCSTASSGGGGGGSGSGGGSGSSS) show a composition bias toward gly residues. Over residues 615 to 625 (GIGTMSSGSSS) the composition is skewed to low complexity. 2 stretches are compositionally biased toward polar residues: residues 626 to 638 (NKTPSPTESNKWT) and 647 to 659 (ANQTSSESVSPGN). The span at 768 to 800 (SDSGTSGSGSTSSSSSSSDSAPGEVVPMPGPGE) shows a compositional bias: low complexity. The span at 844–854 (QRQKKPRKKKP) shows a compositional bias: basic residues. A phosphoserine mark is found at Ser863 and Ser864. Composition is skewed to low complexity over residues 880–893 (AAAAAAAQAQATAT), 909–928 (QQQSGGSGNLSSASAGSSSQ), 994–1028 (ANASAVAAASSSSDEDSSSSTGSTGSKSSSSSSSS), 1071–1081 (SGSSSPSSSSS), and 1111–1131 (SQHSQQLSSSECSSSSGSSTS). The segment at residues 900 to 912 (KKGRGRPRKQQQS) is a DNA-binding region (a.T hook). Ser920 and Ser922 each carry phosphoserine. 2 stretches are compositionally biased toward basic and acidic residues: residues 1295 to 1312 (PHPVKPEPELDAGYESKF) and 1321 to 1355 (FQLKQERDRERERERDRDRERERERERDREREREQ). Position 1442 is a phosphoserine (Ser1442). 2 stretches are compositionally biased toward low complexity: residues 1483–1499 (AAATATAATSTTGTSTA) and 1656–1676 (GNTPSSISPSNSVGSQGSGSN). 2 disordered regions span residues 1483-1502 (AAATATAATSTTGTSTAPPA) and 1656-1683 (GNTPSSISPSNSVGSQGSGSNTPPGKIV).

This sequence belongs to the AF4 family.

It is found in the nucleus. Has a role in transcriptional regulation. Acts in parallel with the Ras/MAPK and the PI3K/PKB pathways in the control of cell identity and cellular growth. Essential for regulation of the cytoskeleton and cell growth but not for cell proliferation or growth rate. Required specifically for the microtubule-based basal transport of lipid droplets. Plays a partially redundant function downstream of Raf in cell fate specification in the developing eye. Pair-rule protein that regulates embryonic cellularization, gastrulation and segmentation. In Drosophila pseudoobscura pseudoobscura (Fruit fly), this protein is AF4/FMR2 family member lilli.